A 293-amino-acid polypeptide reads, in one-letter code: Single-pass membrane and coiled-coil domain-containing protein 2 (293 aa).

Positions 116–188 (KNLLEFLLKD…SAKLRMYQME (73 aa)) form a coiled coil. The chain crosses the membrane as a helical span at residues 234–254 (IFIMFYVLTVTGLLCYILFFG).

The protein localises to the membrane. This Macaca fascicularis (Crab-eating macaque) protein is Single-pass membrane and coiled-coil domain-containing protein 2 (SMCO2).